The primary structure comprises 272 residues: Ribonuclease 3 (272 aa).

The tract at residues 1–22 (MSLQFLRSEASDGAGETSDASS) is disordered. Residues 31–162 (TATHLARLTG…LVGAIYLDQG (132 aa)) enclose the RNase III domain. Glutamate 75 lines the Mg(2+) pocket. Aspartate 79 is a catalytic residue. Positions 148 and 151 each coordinate Mg(2+). Glutamate 151 is a catalytic residue. Positions 189 to 258 (NYKSRLIEYT…AKEAMKRLES (70 aa)) constitute a DRBM domain.

This sequence belongs to the ribonuclease III family. In terms of assembly, homodimer. It depends on Mg(2+) as a cofactor.

The protein localises to the cytoplasm. The enzyme catalyses Endonucleolytic cleavage to 5'-phosphomonoester.. Digests double-stranded RNA. Involved in the processing of primary rRNA transcript to yield the immediate precursors to the large and small rRNAs (23S and 16S). Processes some mRNAs, and tRNAs when they are encoded in the rRNA operon. Processes pre-crRNA and tracrRNA of type II CRISPR loci if present in the organism. The chain is Ribonuclease 3 from Chlorobaculum tepidum (strain ATCC 49652 / DSM 12025 / NBRC 103806 / TLS) (Chlorobium tepidum).